A 124-amino-acid polypeptide reads, in one-letter code: ATP synthase epsilon chain (124 aa).

Belongs to the ATPase epsilon chain family. F-type ATPases have 2 components, CF(1) - the catalytic core - and CF(0) - the membrane proton channel. CF(1) has five subunits: alpha(3), beta(3), gamma(1), delta(1), epsilon(1). CF(0) has three main subunits: a, b and c.

It localises to the cell membrane. In terms of biological role, produces ATP from ADP in the presence of a proton gradient across the membrane. This chain is ATP synthase epsilon chain, found in Corynebacterium efficiens (strain DSM 44549 / YS-314 / AJ 12310 / JCM 11189 / NBRC 100395).